Reading from the N-terminus, the 38-residue chain is Large ribosomal subunit protein bL36 (38 aa).

Belongs to the bacterial ribosomal protein bL36 family.

This Synechococcus sp. (strain JA-2-3B'a(2-13)) (Cyanobacteria bacterium Yellowstone B-Prime) protein is Large ribosomal subunit protein bL36.